The sequence spans 337 residues: Histidine N-acetyltransferase (337 aa).

The propeptide at 1 to 2 (MK) is removed in mature form. In terms of domain architecture, N-acetyltransferase spans 21–157 (LQFSVATEED…GILLMRFRAE (137 aa)).

As to expression, expressed exclusively in the brain and lens.

The enzyme catalyses L-histidine + acetyl-CoA = N(alpha)-acetyl-L-histidine + CoA + H(+). Enzyme responsible for the N-acetyl-histidine (NAH) synthesis, which is a major constituent of brain and lens of ectothermic vertebrates. This is Histidine N-acetyltransferase (hisat) from Oreochromis niloticus (Nile tilapia).